The chain runs to 208 residues: Uracil phosphoribosyltransferase (208 aa).

5-phospho-alpha-D-ribose 1-diphosphate contacts are provided by residues Arg78, Arg103, and 130–138; that span reads DPMLATGGS. Residues Ile193 and 198-200 each bind uracil; that span reads GDA. Residue Asp199 participates in 5-phospho-alpha-D-ribose 1-diphosphate binding.

This sequence belongs to the UPRTase family. Mg(2+) serves as cofactor.

The catalysed reaction is UMP + diphosphate = 5-phospho-alpha-D-ribose 1-diphosphate + uracil. Its pathway is pyrimidine metabolism; UMP biosynthesis via salvage pathway; UMP from uracil: step 1/1. Allosterically activated by GTP. Its function is as follows. Catalyzes the conversion of uracil and 5-phospho-alpha-D-ribose 1-diphosphate (PRPP) to UMP and diphosphate. This Haemophilus ducreyi (strain 35000HP / ATCC 700724) protein is Uracil phosphoribosyltransferase.